Consider the following 279-residue polypeptide: Nitrogenase vanadium-iron protein alpha chain (279 aa).

Cysteine 5, cysteine 31, and cysteine 94 together coordinate [8Fe-7S] cluster. Cysteine 213 is a [7Fe-V-9S-C-homocitryl] cluster binding site.

It belongs to the NifD/NifK/NifE/NifN family. In terms of assembly, hexamer of two alpha, two beta, and two delta chains. Requires [8Fe-7S] cluster as cofactor. The cofactor is [7Fe-V-9S-C-homocitryl] cluster.

The enzyme catalyses N2 + 8 reduced [2Fe-2S]-[ferredoxin] + 16 ATP + 16 H2O = H2 + 8 oxidized [2Fe-2S]-[ferredoxin] + 2 NH4(+) + 16 ADP + 16 phosphate + 6 H(+). In terms of biological role, this vanadium-iron protein is part of the nitrogenase complex that catalyzes the key enzymatic reactions in nitrogen fixation. This Azotobacter salinestris protein is Nitrogenase vanadium-iron protein alpha chain (vnfD).